Consider the following 261-residue polypeptide: Cytochrome c oxidase subunit 3 (261 aa).

Over 1–15 the chain is Mitochondrial matrix; the sequence is MTHQTHAYHMVNPSP. Residues 16–34 form a helical membrane-spanning segment; sequence WPLTGALSALLMTSGLIMW. Residues 35–40 are Mitochondrial intermembrane-facing; that stretch reads FHFNSV. Residues 41 to 66 form a helical membrane-spanning segment; sequence ALLTLGLTTNMLTMYQWWRDVIREST. Residues 67–72 lie on the Mitochondrial matrix side of the membrane; that stretch reads FQGHHT. Residues 73-105 traverse the membrane as a helical segment; the sequence is PNVQKGLRYGMILFIISEVLFFTGFFWAFYHSS. Residues 106–128 are Mitochondrial intermembrane-facing; it reads LAPTPELGGCWPPTGIHPLNPLE. The chain crosses the membrane as a helical span at residues 129–152; sequence VPLLNTSVLLASGVSITWAHHSLM. At 153–155 the chain is on the mitochondrial matrix side; it reads EGN. A helical membrane pass occupies residues 156–183; it reads RNHMLQALFITIALGVYFTLLQASEYYE. Residues 184–190 are Mitochondrial intermembrane-facing; the sequence is APFTISD. The helical transmembrane segment at 191 to 223 threads the bilayer; sequence GVYGSTFFVATGFHGLHVIIGSTFLIVCFFRQL. Residues 224–232 lie on the Mitochondrial matrix side of the membrane; the sequence is KFHFTSSHH. The helical transmembrane segment at 233-256 threads the bilayer; sequence FGFEAAAWYWHFVDVVWLFLYVSI. Residues 257 to 261 lie on the Mitochondrial intermembrane side of the membrane; it reads YWWGS.

Belongs to the cytochrome c oxidase subunit 3 family. In terms of assembly, component of the cytochrome c oxidase (complex IV, CIV), a multisubunit enzyme composed of 14 subunits. The complex is composed of a catalytic core of 3 subunits MT-CO1, MT-CO2 and MT-CO3, encoded in the mitochondrial DNA, and 11 supernumerary subunits COX4I, COX5A, COX5B, COX6A, COX6B, COX6C, COX7A, COX7B, COX7C, COX8 and NDUFA4, which are encoded in the nuclear genome. The complex exists as a monomer or a dimer and forms supercomplexes (SCs) in the inner mitochondrial membrane with NADH-ubiquinone oxidoreductase (complex I, CI) and ubiquinol-cytochrome c oxidoreductase (cytochrome b-c1 complex, complex III, CIII), resulting in different assemblies (supercomplex SCI(1)III(2)IV(1) and megacomplex MCI(2)III(2)IV(2)).

It localises to the mitochondrion inner membrane. It catalyses the reaction 4 Fe(II)-[cytochrome c] + O2 + 8 H(+)(in) = 4 Fe(III)-[cytochrome c] + 2 H2O + 4 H(+)(out). Its function is as follows. Component of the cytochrome c oxidase, the last enzyme in the mitochondrial electron transport chain which drives oxidative phosphorylation. The respiratory chain contains 3 multisubunit complexes succinate dehydrogenase (complex II, CII), ubiquinol-cytochrome c oxidoreductase (cytochrome b-c1 complex, complex III, CIII) and cytochrome c oxidase (complex IV, CIV), that cooperate to transfer electrons derived from NADH and succinate to molecular oxygen, creating an electrochemical gradient over the inner membrane that drives transmembrane transport and the ATP synthase. Cytochrome c oxidase is the component of the respiratory chain that catalyzes the reduction of oxygen to water. Electrons originating from reduced cytochrome c in the intermembrane space (IMS) are transferred via the dinuclear copper A center (CU(A)) of subunit 2 and heme A of subunit 1 to the active site in subunit 1, a binuclear center (BNC) formed by heme A3 and copper B (CU(B)). The BNC reduces molecular oxygen to 2 water molecules using 4 electrons from cytochrome c in the IMS and 4 protons from the mitochondrial matrix. This is Cytochrome c oxidase subunit 3 (MT-CO3) from Nanger dama (Dama gazelle).